The sequence spans 200 residues: Thymidine kinase (200 aa).

Residues 9-16 (STMNAGKS) and 88-91 (DEAH) contribute to the ATP site. Residue Glu-89 is the Proton acceptor of the active site. Positions 146, 148, 183, and 186 each coordinate Zn(2+).

Belongs to the thymidine kinase family. Homotetramer.

It localises to the cytoplasm. It carries out the reaction thymidine + ATP = dTMP + ADP + H(+). The sequence is that of Thymidine kinase from Rhizobium etli (strain ATCC 51251 / DSM 11541 / JCM 21823 / NBRC 15573 / CFN 42).